We begin with the raw amino-acid sequence, 88 residues long: Large ribosomal subunit protein bL27 (88 aa).

A disordered region spans residues 1–21; the sequence is MAHKKGQGSTQNNRDSAGRRL.

The protein belongs to the bacterial ribosomal protein bL27 family.

The chain is Large ribosomal subunit protein bL27 from Helicobacter acinonychis (strain Sheeba).